The chain runs to 288 residues: Acyl-CoA-binding domain-containing protein 6 homolog (288 aa).

An ACB domain is found at 6–94 (IENKFKLAVD…VNALSPGWDS (89 aa)). An acyl-CoA contacts are provided by residues 36 to 40 (YCNYK), lysine 62, and tyrosine 81. ANK repeat units lie at residues 200-229 (DGRTALIWACDRGYFEIAKLLIENGSNVNV) and 233-263 (EGMTPLHYAVVCDQFEICKLLLSQSSIDKSI).

It is found in the cytoplasm. Binds long-chain acyl-coenzyme A molecules with a strong preference for unsaturated C18:1-CoA. Does not bind fatty acids. Plays a role in protein N-myristoylation. This chain is Acyl-CoA-binding domain-containing protein 6 homolog (acbd6), found in Dictyostelium discoideum (Social amoeba).